A 77-amino-acid polypeptide reads, in one-letter code: Acyl carrier protein (77 aa).

A Carrier domain is found at 1 to 76 (MSLEDDVKSI…DVITYIKTRQ (76 aa)). Ser-36 is subject to O-(pantetheine 4'-phosphoryl)serine.

It belongs to the acyl carrier protein (ACP) family. 4'-phosphopantetheine is transferred from CoA to a specific serine of apo-ACP by AcpS. This modification is essential for activity because fatty acids are bound in thioester linkage to the sulfhydryl of the prosthetic group.

Its subcellular location is the cytoplasm. It participates in lipid metabolism; fatty acid biosynthesis. Its function is as follows. Carrier of the growing fatty acid chain in fatty acid biosynthesis. The protein is Acyl carrier protein of Chlamydia caviae (strain ATCC VR-813 / DSM 19441 / 03DC25 / GPIC) (Chlamydophila caviae).